We begin with the raw amino-acid sequence, 238 residues long: Probable transcriptional regulatory protein YcdB (238 aa).

It belongs to the TACO1 family. YeeN subfamily.

The protein localises to the cytoplasm. This is Probable transcriptional regulatory protein YcdB (ycdB) from Lactococcus lactis subsp. lactis (strain IL1403) (Streptococcus lactis).